Consider the following 396-residue polypeptide: MAEVNVRNFNINFGPQHPAAHGVLRMVLELDGEVVERVDPHIGLLHRGTEKLMETKTYLQAGPYLDRLDYVAPMNQEHAFVLAVEKLLGVEVPKRGQLIRVLFSEIGRLLNHLLNVTTQAMDVGALTPPLWGFEQREKLMIFYERACGARLHANYFRPGGVHQDLPEVLIEDIGNFIDPFLVALGNLDALITPNRIFKQRNVDIGVVSIDEAWARGFSGVMIRGAGVPWDLRKSQPYECYDEMEFDIPVGKNSDCYDRYLIRMEEMRQSAKIMRQCVDRLLSTEKDGPVSSLDRKIVPPKRSEMKNSMEALIHHFKLYTEGFHTPPGEVYVAVEAPKGEFGVYLVSDGTNKPYRVKLRAPGFAHLQAMDFLTRGHMLADATAILGSIDIVFGEVDR.

It belongs to the complex I 49 kDa subunit family. NDH-1 is composed of 14 different subunits. Subunits NuoB, C, D, E, F, and G constitute the peripheral sector of the complex.

The protein resides in the cell inner membrane. The enzyme catalyses a quinone + NADH + 5 H(+)(in) = a quinol + NAD(+) + 4 H(+)(out). Functionally, NDH-1 shuttles electrons from NADH, via FMN and iron-sulfur (Fe-S) centers, to quinones in the respiratory chain. The immediate electron acceptor for the enzyme in this species is believed to be ubiquinone. Couples the redox reaction to proton translocation (for every two electrons transferred, four hydrogen ions are translocated across the cytoplasmic membrane), and thus conserves the redox energy in a proton gradient. This Bartonella bacilliformis (strain ATCC 35685 / KC583 / Herrer 020/F12,63) protein is NADH-quinone oxidoreductase subunit D.